Consider the following 256-residue polypeptide: Thiazole synthase (256 aa).

Lys95 serves as the catalytic Schiff-base intermediate with DXP. Residues Gly156, 182–183 (AG), and 204–205 (NT) contribute to the 1-deoxy-D-xylulose 5-phosphate site.

It belongs to the ThiG family. In terms of assembly, homotetramer. Forms heterodimers with either ThiH or ThiS.

Its subcellular location is the cytoplasm. It catalyses the reaction [ThiS sulfur-carrier protein]-C-terminal-Gly-aminoethanethioate + 2-iminoacetate + 1-deoxy-D-xylulose 5-phosphate = [ThiS sulfur-carrier protein]-C-terminal Gly-Gly + 2-[(2R,5Z)-2-carboxy-4-methylthiazol-5(2H)-ylidene]ethyl phosphate + 2 H2O + H(+). It participates in cofactor biosynthesis; thiamine diphosphate biosynthesis. Its function is as follows. Catalyzes the rearrangement of 1-deoxy-D-xylulose 5-phosphate (DXP) to produce the thiazole phosphate moiety of thiamine. Sulfur is provided by the thiocarboxylate moiety of the carrier protein ThiS. In vitro, sulfur can be provided by H(2)S. The chain is Thiazole synthase from Salmonella paratyphi B (strain ATCC BAA-1250 / SPB7).